A 192-amino-acid polypeptide reads, in one-letter code: Peptidyl-tRNA hydrolase (192 aa).

Position 16 (Tyr16) interacts with tRNA. Catalysis depends on His21, which acts as the Proton acceptor. Tyr66 and Asn68 together coordinate tRNA.

The protein belongs to the PTH family. In terms of assembly, monomer.

It is found in the cytoplasm. The catalysed reaction is an N-acyl-L-alpha-aminoacyl-tRNA + H2O = an N-acyl-L-amino acid + a tRNA + H(+). Hydrolyzes ribosome-free peptidyl-tRNAs (with 1 or more amino acids incorporated), which drop off the ribosome during protein synthesis, or as a result of ribosome stalling. In terms of biological role, catalyzes the release of premature peptidyl moieties from peptidyl-tRNA molecules trapped in stalled 50S ribosomal subunits, and thus maintains levels of free tRNAs and 50S ribosomes. The polypeptide is Peptidyl-tRNA hydrolase (Aquifex aeolicus (strain VF5)).